We begin with the raw amino-acid sequence, 300 residues long: MIKTNWEGNCFLNFFNNKSSLENVDKTIFKSKSTSPYKLLKSTHDQEGRCILPVLHTAGGLVGGDLLEFEVNLEKNSKVLLTTSSAQKVYGSVGISKVNPKGTFSKQNNLIKILDNSHLEYLPQETIIFANGLYEQKFKVFISETSSFLFTDLIRLGRSSSGESIESGVFRSKLEIVRNNDLYDDWEYVDQIELSKASYVAKSGMDYMPVFGSLIWICEKDFSKSNINNLVGNIKKIFNETENNLSIGILENGISVRFLGSSSQDARKCFFCIWKQIRSVCGFCEPKYQGVWPLQDPMNY.

It belongs to the UreD family. UreD, UreF and UreG form a complex that acts as a GTP-hydrolysis-dependent molecular chaperone, activating the urease apoprotein by helping to assemble the nickel containing metallocenter of UreC. The UreE protein probably delivers the nickel.

The protein localises to the cytoplasm. In terms of biological role, required for maturation of urease via the functional incorporation of the urease nickel metallocenter. The sequence is that of Urease accessory protein UreD from Prochlorococcus marinus (strain MIT 9215).